A 335-amino-acid chain; its full sequence is MLP-like protein 28 (335 aa).

Belongs to the MLP family.

In terms of biological role, can bind steroids (in vitro), and may also bind other types of hydrophobic ligands. This Arabidopsis thaliana (Mouse-ear cress) protein is MLP-like protein 28 (MLP28).